The sequence spans 412 residues: 1-deoxy-D-xylulose 5-phosphate reductoisomerase (412 aa).

The NADPH site is built by Thr10, Gly11, Ser12, Ile13, Gly36, Lys37, Asn38, and Asn130. Lys131 contacts 1-deoxy-D-xylulose 5-phosphate. Glu132 lines the NADPH pocket. Asp156 provides a ligand contact to Mn(2+). 1-deoxy-D-xylulose 5-phosphate-binding residues include Ser157, Glu158, Ser194, and His217. Glu158 lines the Mn(2+) pocket. NADPH is bound at residue Gly223. 1-deoxy-D-xylulose 5-phosphate contacts are provided by Ser230, Asn235, Lys236, and Glu239. A Mn(2+)-binding site is contributed by Glu239.

It belongs to the DXR family. Mg(2+) serves as cofactor. Mn(2+) is required as a cofactor.

The catalysed reaction is 2-C-methyl-D-erythritol 4-phosphate + NADP(+) = 1-deoxy-D-xylulose 5-phosphate + NADPH + H(+). It participates in isoprenoid biosynthesis; isopentenyl diphosphate biosynthesis via DXP pathway; isopentenyl diphosphate from 1-deoxy-D-xylulose 5-phosphate: step 1/6. In terms of biological role, catalyzes the NADPH-dependent rearrangement and reduction of 1-deoxy-D-xylulose-5-phosphate (DXP) to 2-C-methyl-D-erythritol 4-phosphate (MEP). The chain is 1-deoxy-D-xylulose 5-phosphate reductoisomerase from Prochlorococcus marinus (strain NATL1A).